A 221-amino-acid polypeptide reads, in one-letter code: Deoxyribose-phosphate aldolase (221 aa).

Aspartate 90 serves as the catalytic Proton donor/acceptor. Residue lysine 152 is the Schiff-base intermediate with acetaldehyde of the active site. The active-site Proton donor/acceptor is the lysine 181.

The protein belongs to the DeoC/FbaB aldolase family. DeoC type 1 subfamily.

It localises to the cytoplasm. It carries out the reaction 2-deoxy-D-ribose 5-phosphate = D-glyceraldehyde 3-phosphate + acetaldehyde. It functions in the pathway carbohydrate degradation; 2-deoxy-D-ribose 1-phosphate degradation; D-glyceraldehyde 3-phosphate and acetaldehyde from 2-deoxy-alpha-D-ribose 1-phosphate: step 2/2. Catalyzes a reversible aldol reaction between acetaldehyde and D-glyceraldehyde 3-phosphate to generate 2-deoxy-D-ribose 5-phosphate. In Exiguobacterium sibiricum (strain DSM 17290 / CCUG 55495 / CIP 109462 / JCM 13490 / 255-15), this protein is Deoxyribose-phosphate aldolase.